Here is a 391-residue protein sequence, read N- to C-terminus: Transposase for insertion sequence element IS905 (391 aa).

The protein belongs to the transposase mutator family.

Functionally, required for the transposition of the insertion element. The sequence is that of Transposase for insertion sequence element IS905 (tra905) from Lactococcus lactis subsp. lactis (strain IL1403) (Streptococcus lactis).